We begin with the raw amino-acid sequence, 377 residues long: Chaperone protein DnaJ (377 aa).

Residues 4–69 enclose the J domain; it reads DYYEALGVTR…QKRAAYDRFG (66 aa). The CR-type zinc-finger motif lies at 135–213; the sequence is GKTAQIRVPT…CHGQGRVTQE (79 aa). Zn(2+) is bound by residues Cys-148, Cys-151, Cys-165, Cys-168, Cys-187, Cys-190, Cys-201, and Cys-204. CXXCXGXG motif repeat units lie at residues 148–155, 165–172, 187–194, and 201–208; these read CDECSGSG, CTMCSGSG, CPGCNGRG, and CEKCHGQG.

The protein belongs to the DnaJ family. As to quaternary structure, homodimer. It depends on Zn(2+) as a cofactor.

It localises to the cytoplasm. Participates actively in the response to hyperosmotic and heat shock by preventing the aggregation of stress-denatured proteins and by disaggregating proteins, also in an autonomous, DnaK-independent fashion. Unfolded proteins bind initially to DnaJ; upon interaction with the DnaJ-bound protein, DnaK hydrolyzes its bound ATP, resulting in the formation of a stable complex. GrpE releases ADP from DnaK; ATP binding to DnaK triggers the release of the substrate protein, thus completing the reaction cycle. Several rounds of ATP-dependent interactions between DnaJ, DnaK and GrpE are required for fully efficient folding. Also involved, together with DnaK and GrpE, in the DNA replication of plasmids through activation of initiation proteins. The protein is Chaperone protein DnaJ of Brucella ovis (strain ATCC 25840 / 63/290 / NCTC 10512).